The sequence spans 367 residues: Alanine racemase (367 aa).

K40 (proton acceptor; specific for D-alanine) is an active-site residue. K40 bears the N6-(pyridoxal phosphate)lysine mark. R136 serves as a coordination point for substrate. The active-site Proton acceptor; specific for L-alanine is Y263. M310 serves as a coordination point for substrate.

The protein belongs to the alanine racemase family. Pyridoxal 5'-phosphate is required as a cofactor.

The catalysed reaction is L-alanine = D-alanine. It functions in the pathway amino-acid biosynthesis; D-alanine biosynthesis; D-alanine from L-alanine: step 1/1. Functionally, catalyzes the interconversion of L-alanine and D-alanine. May also act on other amino acids. This is Alanine racemase (alr) from Streptococcus pneumoniae (strain Taiwan19F-14).